The chain runs to 104 residues: Large ribosomal subunit protein uL24 (104 aa).

The protein belongs to the universal ribosomal protein uL24 family. Part of the 50S ribosomal subunit.

One of two assembly initiator proteins, it binds directly to the 5'-end of the 23S rRNA, where it nucleates assembly of the 50S subunit. Its function is as follows. One of the proteins that surrounds the polypeptide exit tunnel on the outside of the subunit. The polypeptide is Large ribosomal subunit protein uL24 (Chelativorans sp. (strain BNC1)).